We begin with the raw amino-acid sequence, 122 residues long: MIQMQSYLGVADNSGAKEVMCIKVLGGSKRRYASIGDIIKVTVKEAIPRGKVKKGEVYDAVVVRTRSGVRRPDGSLIRFDGNAAVLLNNKQEPIGTRVFGPVTRELRSEKLMKIVSLAPEVL.

Belongs to the universal ribosomal protein uL14 family. As to quaternary structure, part of the 50S ribosomal subunit. Forms a cluster with proteins L3 and L19. In the 70S ribosome, L14 and L19 interact and together make contacts with the 16S rRNA in bridges B5 and B8.

In terms of biological role, binds to 23S rRNA. Forms part of two intersubunit bridges in the 70S ribosome. The chain is Large ribosomal subunit protein uL14 from Xylella fastidiosa (strain 9a5c).